Here is a 374-residue protein sequence, read N- to C-terminus: NADH-quinone oxidoreductase subunit D 1 (374 aa).

The protein belongs to the complex I 49 kDa subunit family. NDH-1 is composed of 14 different subunits. Subunits NuoB, C, D, E, F, and G constitute the peripheral sector of the complex.

The protein localises to the cell membrane. It catalyses the reaction a quinone + NADH + 5 H(+)(in) = a quinol + NAD(+) + 4 H(+)(out). Its function is as follows. NDH-1 shuttles electrons from NADH, via FMN and iron-sulfur (Fe-S) centers, to quinones in the respiratory chain. The immediate electron acceptor for the enzyme in this species is believed to be ubiquinone. Couples the redox reaction to proton translocation (for every two electrons transferred, four hydrogen ions are translocated across the cytoplasmic membrane), and thus conserves the redox energy in a proton gradient. The polypeptide is NADH-quinone oxidoreductase subunit D 1 (Roseiflexus sp. (strain RS-1)).